Consider the following 585-residue polypeptide: Arginine--tRNA ligase (585 aa).

The short motif at 130–140 (ANPTGPMHVGH) is the 'HIGH' region element.

It belongs to the class-I aminoacyl-tRNA synthetase family. In terms of assembly, monomer.

The protein resides in the cytoplasm. The catalysed reaction is tRNA(Arg) + L-arginine + ATP = L-arginyl-tRNA(Arg) + AMP + diphosphate. The polypeptide is Arginine--tRNA ligase (Methylorubrum extorquens (strain CM4 / NCIMB 13688) (Methylobacterium extorquens)).